The sequence spans 64 residues: Small ribosomal subunit protein bS21 (64 aa).

This sequence belongs to the bacterial ribosomal protein bS21 family.

This chain is Small ribosomal subunit protein bS21, found in Karelsulcia muelleri (strain GWSS) (Sulcia muelleri).